The chain runs to 428 residues: 3-phosphoshikimate 1-carboxyvinyltransferase (428 aa).

Lys20, Ser21, and Arg25 together coordinate 3-phosphoshikimate. Lys20 lines the phosphoenolpyruvate pocket. Residues Gly92 and Arg120 each contribute to the phosphoenolpyruvate site. 3-phosphoshikimate contacts are provided by Ser166, Gln168, Asp314, and Lys341. Residue Gln168 participates in phosphoenolpyruvate binding. Asp314 serves as the catalytic Proton acceptor. Residues Arg345 and Arg387 each coordinate phosphoenolpyruvate.

It belongs to the EPSP synthase family. Monomer.

The protein localises to the cytoplasm. It catalyses the reaction 3-phosphoshikimate + phosphoenolpyruvate = 5-O-(1-carboxyvinyl)-3-phosphoshikimate + phosphate. It participates in metabolic intermediate biosynthesis; chorismate biosynthesis; chorismate from D-erythrose 4-phosphate and phosphoenolpyruvate: step 6/7. Catalyzes the transfer of the enolpyruvyl moiety of phosphoenolpyruvate (PEP) to the 5-hydroxyl of shikimate-3-phosphate (S3P) to produce enolpyruvyl shikimate-3-phosphate and inorganic phosphate. This is 3-phosphoshikimate 1-carboxyvinyltransferase from Listeria monocytogenes serotype 4a (strain HCC23).